The primary structure comprises 252 residues: Small ribosomal subunit protein eS4 (252 aa).

One can recognise an S4 RNA-binding domain in the interval 43–105 (FPLLIIVRDI…TGETYRVIPV (63 aa)).

This sequence belongs to the eukaryotic ribosomal protein eS4 family.

This chain is Small ribosomal subunit protein eS4, found in Staphylothermus marinus (strain ATCC 43588 / DSM 3639 / JCM 9404 / F1).